A 247-amino-acid polypeptide reads, in one-letter code: Trypsin-4 (247 aa).

The signal sequence occupies residues 1-15 (MKISIFFAFLGAAVA). Positions 16–23 (LPVNDDDK) are cleaved as a propeptide — activation peptide. Residues 24–245 (IVGGYTCPKH…YLSWIQETMA (222 aa)) enclose the Peptidase S1 domain. Intrachain disulfides connect Cys30/Cys161, Cys49/Cys65, Cys133/Cys234, Cys140/Cys207, Cys172/Cys186, and Cys197/Cys221. His64 serves as the catalytic Charge relay system. Positions 76, 78, 81, and 86 each coordinate Ca(2+). Asp108 functions as the Charge relay system in the catalytic mechanism. Catalysis depends on Ser201, which acts as the Charge relay system.

It belongs to the peptidase S1 family. Ca(2+) is required as a cofactor. Post-translationally, proteolytically cleaved and activated by an autocatalytic mechanism. Cleavage by CTRC inhibits autoactivation.

The protein resides in the secreted. Its subcellular location is the extracellular space. It catalyses the reaction Preferential cleavage: Arg-|-Xaa, Lys-|-Xaa.. Activated by autocatalytic cleavage. Cleavage by CTRC inhibits autoactivation. Functionally, serine protease capable of autoactivation. The polypeptide is Trypsin-4 (Rattus norvegicus (Rat)).